The primary structure comprises 104 residues: Large ribosomal subunit protein bL21 (104 aa).

It belongs to the bacterial ribosomal protein bL21 family. Part of the 50S ribosomal subunit. Contacts protein L20.

Functionally, this protein binds to 23S rRNA in the presence of protein L20. The protein is Large ribosomal subunit protein bL21 of Helicobacter pylori (strain J99 / ATCC 700824) (Campylobacter pylori J99).